Here is a 246-residue protein sequence, read N- to C-terminus: tRNA pseudouridine synthase A (246 aa).

The Nucleophile role is filled by Asp53. Tyr111 is a substrate binding site.

This sequence belongs to the tRNA pseudouridine synthase TruA family. Homodimer.

The catalysed reaction is uridine(38/39/40) in tRNA = pseudouridine(38/39/40) in tRNA. Formation of pseudouridine at positions 38, 39 and 40 in the anticodon stem and loop of transfer RNAs. The protein is tRNA pseudouridine synthase A of Anoxybacillus flavithermus (strain DSM 21510 / WK1).